The primary structure comprises 356 residues: Nucleosome assembly protein 1;4 (356 aa).

A coiled-coil region spans residues 34 to 88 (VNALKNKLQNLAGQHSDILETLTPQVRKRVDVLRELQSQHDELESHFFEERAALE). The short motif at 55–70 (LTPQVRKRVDVLRELQ) is the Nuclear export signal element. Residues 230 to 235 (KKKPKK) carry the Nuclear localization signal motif. Residues 304–356 (FTGEAAEGDEFEDIEDDDDDDDDDDDEDDEDEEDEDDEEEEKSKKKSSALKVE) are disordered. Residues 309–343 (AEGDEFEDIEDDDDDDDDDDDEDDEDEEDEDDEEE) show a composition bias toward acidic residues. Residues 347–356 (KKKSSALKVE) are compositionally biased toward basic residues.

It belongs to the nucleosome assembly protein (NAP) family. Can form homomeric and heteromeric protein complexes with NAP1;3. Binds histones H2A and H2B in vivo. Also able to bind histones H1 and H4 in vitro. Interacts with CYCB1;1 and with alpha tubulin.

Its subcellular location is the nucleus. The protein resides in the cytoplasm. May modulate chromatin structure by regulation of nucleosome assembly/disassembly. Could function together with B-type cyclins in the regulation of microtubule dynamics. This Nicotiana tabacum (Common tobacco) protein is Nucleosome assembly protein 1;4 (NAP1;4).